The following is a 108-amino-acid chain: uncharacterized protein (108 aa).

Positions 1 to 20 (MNLKSIIFVLFIAFFAFSLA) are cleaved as a signal peptide. N-linked (GlcNAc...) asparagine glycosylation is present at asparagine 39.

This sequence belongs to the Dictyostelium gerABC family.

The protein localises to the secreted. This is an uncharacterized protein from Dictyostelium discoideum (Social amoeba).